Reading from the N-terminus, the 200-residue chain is QLCLLQPLGSGGFGSVYKATYHGATVAVKQVKKSSKNRLASRQSFWAELNVARLQHANVVRVVAASTCAPASQNSLGTIIMEYVGNITLHHVIYGTSDAWRQGEDDEGGCGKKALSMEETVCYSCDIMTGLAFLHSQGIVHLDLKPANVFITEQGVCKIGDFGCSQKLEDGLSQSPQVCQQGGTYTHRAPELLKGERVTA.

In terms of domain architecture, Protein kinase spans 2-200; the sequence is LCLLQPLGSG…ELLKGERVTA (199 aa). Residues 8–16 and Lys29 each bind ATP; that span reads LGSGGFGSV. Asp143 (proton acceptor) is an active-site residue.

Belongs to the protein kinase superfamily. Ser/Thr protein kinase family.

It carries out the reaction L-seryl-[protein] + ATP = O-phospho-L-seryl-[protein] + ADP + H(+). The catalysed reaction is L-threonyl-[protein] + ATP = O-phospho-L-threonyl-[protein] + ADP + H(+). The protein is Serine/threonine-protein kinase mos (MOS) of Apteryx australis (Southern brown kiwi).